A 491-amino-acid polypeptide reads, in one-letter code: Nicotinamide phosphoribosyltransferase (491 aa).

An N-acetylmethionine modification is found at Met1. Position 188 is a phosphotyrosine (Tyr188). Arg196 is a binding site for diphosphate. Asp219 lines the beta-nicotinamide D-ribonucleotide pocket. Positions 247 and 311 each coordinate diphosphate. Residues 311 to 313, 353 to 354, Gly384, and Arg392 contribute to the beta-nicotinamide D-ribonucleotide site; these read RPD and GD. Ser472 carries the phosphoserine modification.

Belongs to the NAPRTase family. Homodimer.

The protein resides in the nucleus. Its subcellular location is the cytoplasm. It localises to the secreted. The enzyme catalyses beta-nicotinamide D-ribonucleotide + diphosphate = 5-phospho-alpha-D-ribose 1-diphosphate + nicotinamide + H(+). The protein operates within cofactor biosynthesis; NAD(+) biosynthesis; nicotinamide D-ribonucleotide from 5-phospho-alpha-D-ribose 1-diphosphate and nicotinamide: step 1/1. Its function is as follows. Catalyzes the condensation of nicotinamide with 5-phosphoribosyl-1-pyrophosphate to yield nicotinamide mononucleotide, an intermediate in the biosynthesis of NAD. It is the rate limiting component in the mammalian NAD biosynthesis pathway. The secreted form behaves both as a cytokine with immunomodulating properties and an adipokine with anti-diabetic properties, it has no enzymatic activity, partly because of lack of activation by ATP, which has a low level in extracellular space and plasma. Plays a role in the modulation of circadian clock function. Plays a role in the modulation of circadian clock function. NAMPT-dependent oscillatory production of NAD regulates oscillation of clock target gene expression by releasing the core clock component: CLOCK-BMAL1 heterodimer from NAD-dependent SIRT1-mediated suppression. This is Nicotinamide phosphoribosyltransferase (NAMPT) from Sus scrofa (Pig).